The chain runs to 759 residues: Protein AKNAD1 (759 aa).

Residues 169-246 (TDQLNPKKDG…HTEKASSGNR (78 aa)) are disordered. Positions 181-192 (SNKPGSPTMTEE) are enriched in polar residues. Positions 371–482 (QKISQGKQMC…EDVKDKVDES (112 aa)) form a coiled coil. The span at 484-496 (YTSAPSLPVSSPV) shows a compositional bias: polar residues. 4 disordered regions span residues 484-543 (YTSA…QEAP), 634-654 (EKAP…FCSD), 678-723 (CRKE…PSLA), and 735-759 (PDTS…MKSQ). Residues 497–509 (TLDDLASTSSSLS) show a composition bias toward low complexity. Residues 639–654 (SDSTPNSDTGHSFCSD) are compositionally biased toward polar residues. Residues 679–688 (RKEPPKEFHY) are compositionally biased toward basic and acidic residues. Residues 735–744 (PDTSKSSPTP) show a composition bias toward polar residues.

This sequence belongs to the AKNA family.

This is Protein AKNAD1 (AKNAD1) from Macaca fascicularis (Crab-eating macaque).